The following is an 805-amino-acid chain: Ubiquitin carboxyl-terminal hydrolase 5 (805 aa).

A Rhodanese domain is found at 159-283 (HGDALLLIDV…WVKLGGAYQS (125 aa)). The segment at 359–380 (RNSPTVQKFSPHPPTTLSKLNT) is disordered. The 359-residue stretch at 446–804 (VGLENIGNCC…SAYVLFYERI (359 aa)) folds into the USP domain. Residue C455 is the Nucleophile of the active site. H761 functions as the Proton acceptor in the catalytic mechanism.

The protein belongs to the peptidase C19 family.

It catalyses the reaction Thiol-dependent hydrolysis of ester, thioester, amide, peptide and isopeptide bonds formed by the C-terminal Gly of ubiquitin (a 76-residue protein attached to proteins as an intracellular targeting signal).. The polypeptide is Ubiquitin carboxyl-terminal hydrolase 5 (UBP5) (Saccharomyces cerevisiae (strain ATCC 204508 / S288c) (Baker's yeast)).